Here is a 130-residue protein sequence, read N- to C-terminus: Gloverin (130 aa).

As to expression, hemolymph.

The protein localises to the secreted. Antibacterial protein active against Gram-negative bacteria. This Hyalophora cecropia (Cecropia moth) protein is Gloverin.